We begin with the raw amino-acid sequence, 422 residues long: Cystine lyase CORI3 (422 aa).

It belongs to the class-I pyridoxal-phosphate-dependent aminotransferase family. Homodimer. It depends on pyridoxal 5'-phosphate as a cofactor. In terms of tissue distribution, expressed in cotyledons, sepals, pistils, flower buds, phloem companion cells and vascular tissues of petiole, leaf, filament and fruit.

It carries out the reaction L-cystine + H2O = S-sulfanyl-L-cysteine + pyruvate + NH4(+). Possesses cystine lyase activity in vitro. Does not possess tyrosine aminotransferase, alanine aminotransferase, aspartate aminotransferase and tryptophan aminotransferase activities. In Arabidopsis thaliana (Mouse-ear cress), this protein is Cystine lyase CORI3.